The sequence spans 1096 residues: Eukaryotic translation initiation factor 3 subunit A (1096 aa).

In terms of domain architecture, PCI spans Gln-323–Ala-502. Coiled coils occupy residues Ser-591–Lys-643, Ser-677–Lys-761, and Lys-811–Ala-839. Basic and acidic residues predominate over residues Glu-808 to Val-852. The segment at Glu-808 to Lys-1096 is disordered. Positions Ala-865–Ser-875 are enriched in polar residues. Composition is skewed to basic and acidic residues over residues Phe-878 to Glu-890, Ser-933 to Ala-942, and Gln-955 to Glu-973. The span at Asp-1008–Trp-1023 shows a compositional bias: polar residues. The segment covering Gly-1085 to Lys-1096 has biased composition (basic and acidic residues).

It belongs to the eIF-3 subunit A family. In terms of assembly, component of the eukaryotic translation initiation factor 3 (eIF-3) complex.

It localises to the cytoplasm. Functionally, RNA-binding component of the eukaryotic translation initiation factor 3 (eIF-3) complex, which is involved in protein synthesis of a specialized repertoire of mRNAs and, together with other initiation factors, stimulates binding of mRNA and methionyl-tRNAi to the 40S ribosome. The eIF-3 complex specifically targets and initiates translation of a subset of mRNAs involved in cell proliferation. The sequence is that of Eukaryotic translation initiation factor 3 subunit A from Brugia malayi (Filarial nematode worm).